Consider the following 76-residue polypeptide: DNA-directed RNA polymerase subunit epsilon (76 aa).

This sequence belongs to the RNA polymerase subunit epsilon family. RNAP is composed of a core of 2 alpha, a beta and a beta' subunit. The core is associated with a delta subunit, and at least one of epsilon or omega. When a sigma factor is associated with the core the holoenzyme is formed, which can initiate transcription.

It carries out the reaction RNA(n) + a ribonucleoside 5'-triphosphate = RNA(n+1) + diphosphate. A non-essential component of RNA polymerase (RNAP). The sequence is that of DNA-directed RNA polymerase subunit epsilon from Streptococcus mutans serotype c (strain ATCC 700610 / UA159).